The chain runs to 163 residues: Ribosome maturation factor RimM (163 aa).

Residues 90-161 (EGRHYWGDLE…VVVDPPEGLL (72 aa)) enclose the PRC barrel domain.

The protein belongs to the RimM family. As to quaternary structure, binds ribosomal protein uS19.

The protein localises to the cytoplasm. Functionally, an accessory protein needed during the final step in the assembly of 30S ribosomal subunit, possibly for assembly of the head region. Essential for efficient processing of 16S rRNA. May be needed both before and after RbfA during the maturation of 16S rRNA. It has affinity for free ribosomal 30S subunits but not for 70S ribosomes. The sequence is that of Ribosome maturation factor RimM from Anaeromyxobacter dehalogenans (strain 2CP-C).